A 335-amino-acid chain; its full sequence is DNA-directed RNA polymerase subunit alpha (335 aa).

The interval 1–231 is alpha N-terminal domain (alpha-NTD); that stretch reads MVREKITVST…DLLIPFLHTK (231 aa). The alpha C-terminal domain (alpha-CTD) stretch occupies residues 263 to 335; the sequence is KKMALKSIFI…FVIDLPKNKF (73 aa).

It belongs to the RNA polymerase alpha chain family. As to quaternary structure, in plastids the minimal PEP RNA polymerase catalytic core is composed of four subunits: alpha, beta, beta', and beta''. When a (nuclear-encoded) sigma factor is associated with the core the holoenzyme is formed, which can initiate transcription.

It is found in the plastid. The protein resides in the chloroplast. It catalyses the reaction RNA(n) + a ribonucleoside 5'-triphosphate = RNA(n+1) + diphosphate. In terms of biological role, DNA-dependent RNA polymerase catalyzes the transcription of DNA into RNA using the four ribonucleoside triphosphates as substrates. The polypeptide is DNA-directed RNA polymerase subunit alpha (Helianthus annuus (Common sunflower)).